Consider the following 499-residue polypeptide: Phenylalanine--tRNA ligase alpha subunit (499 aa).

L-phenylalanine contacts are provided by residues threonine 342, 381–383 (QID), and phenylalanine 422. Glutamate 424 is a Mg(2+) binding site. Phenylalanine 447 is an L-phenylalanine binding site.

Belongs to the class-II aminoacyl-tRNA synthetase family. Phe-tRNA synthetase alpha subunit type 2 subfamily. In terms of assembly, tetramer of two alpha and two beta subunits. Requires Mg(2+) as cofactor.

It localises to the cytoplasm. The catalysed reaction is tRNA(Phe) + L-phenylalanine + ATP = L-phenylalanyl-tRNA(Phe) + AMP + diphosphate + H(+). In Pyrococcus furiosus (strain ATCC 43587 / DSM 3638 / JCM 8422 / Vc1), this protein is Phenylalanine--tRNA ligase alpha subunit.